We begin with the raw amino-acid sequence, 168 residues long: Ribosome maturation factor RimM (168 aa).

Positions 95-168 (KEGDYYWTDL…IIVVEWDADF (74 aa)) constitute a PRC barrel domain.

It belongs to the RimM family. Binds ribosomal protein uS19.

The protein localises to the cytoplasm. An accessory protein needed during the final step in the assembly of 30S ribosomal subunit, possibly for assembly of the head region. Essential for efficient processing of 16S rRNA. May be needed both before and after RbfA during the maturation of 16S rRNA. It has affinity for free ribosomal 30S subunits but not for 70S ribosomes. The polypeptide is Ribosome maturation factor RimM (Coxiella burnetii (strain CbuK_Q154) (Coxiella burnetii (strain Q154))).